Consider the following 588-residue polypeptide: Sentrin-specific protease 2 (588 aa).

Positions 28–31 (KRRR) match the Nuclear localization signal motif. Residue serine 32 is modified to Phosphoserine. Residues 47–52 (PAKRPR) carry the Nuclear localization signal motif. The interval 72 to 381 (GFPFQLTTKP…EKEISNALGH (310 aa)) is axin-binding. A disordered region spans residues 157–184 (EGYNRRPSGRRHSKSNPESSLPWKPQEQ). The Nuclear export signal signature appears at 316–331 (LEPDLSEEVSARLRLG). Residues serine 332 and serine 343 each carry the phosphoserine modification. The tract at residues 394–558 (LRITRGDIQT…MFTCKYADYI (165 aa)) is protease. Catalysis depends on residues histidine 477 and aspartate 494. The active-site Nucleophile is the cysteine 547.

This sequence belongs to the peptidase C48 family. In terms of assembly, binds to SUMO2 and SUMO3. Interacts with the C-terminal domain of NUP153 via its N-terminus. Interacts with MTA1. Binds to AXIN1. In terms of processing, polyubiquitinated; which leads to proteasomal degradation. In terms of tissue distribution, ubiquitous. Highly expressed in brain, lung and testis.

The protein localises to the nucleus. The protein resides in the nuclear pore complex. It is found in the nucleus membrane. Its subcellular location is the cytoplasm. Protease that catalyzes two essential functions in the SUMO pathway. The first is the hydrolysis of an alpha-linked peptide bond at the C-terminal end of the small ubiquitin-like modifier (SUMO) propeptides, SUMO1, SUMO2 and SUMO3 leading to the mature form of the proteins. The second is the deconjugation of SUMO1, SUMO2 and SUMO3 from targeted proteins, by cleaving an epsilon-linked peptide bond between the C-terminal glycine of the mature SUMO and the lysine epsilon-amino group of the target protein. May down-regulate CTNNB1 levels and thereby modulate the Wnt pathway. Deconjugates SUMO2 from MTA1. Plays a dynamic role in adipogenesis by desumoylating and promoting the stabilization of CEBPB. Acts as a regulator of the cGAS-STING pathway by catalyzing desumoylation of CGAS and STING1 during the late phase of viral infection. This Rattus norvegicus (Rat) protein is Sentrin-specific protease 2 (Senp2).